The sequence spans 276 residues: MELRTAASPKDVKHYTTDRLREEFLIDDLFKVNEIKLVYSHIDRIITGSAVPVNQELKLTAGDELRAEYFLQRREMGIINIGGKGTITIDGTVYELEYKDGMYIGMGAKDISFASVDATNPAKFYINSAPAHTSYPTVLIKPENCVNVELGSLEGSNHRVICKYILPGQVESCQLVMGMTQLKPGSVWNTMPCHTHDRRMEVYLYFDMQENDMVFHYMGEPTETRHIIMRNEQAVISPSWSIHSGCGTKAYTFIWGMVGENQDFDDMDACDLKDLR.

The Zn(2+) site is built by histidine 194, histidine 196, glutamate 201, and histidine 243.

The protein belongs to the KduI family. Zn(2+) is required as a cofactor.

It catalyses the reaction 5-dehydro-4-deoxy-D-glucuronate = 3-deoxy-D-glycero-2,5-hexodiulosonate. Its pathway is glycan metabolism; pectin degradation; 2-dehydro-3-deoxy-D-gluconate from pectin: step 4/5. Catalyzes the isomerization of 5-dehydro-4-deoxy-D-glucuronate to 3-deoxy-D-glycero-2,5-hexodiulosonate. In Lachnoclostridium phytofermentans (strain ATCC 700394 / DSM 18823 / ISDg) (Clostridium phytofermentans), this protein is 4-deoxy-L-threo-5-hexosulose-uronate ketol-isomerase.